A 292-amino-acid polypeptide reads, in one-letter code: Elongation factor Ts (292 aa).

The involved in Mg(2+) ion dislocation from EF-Tu stretch occupies residues 79–82 (TDFV).

It belongs to the EF-Ts family.

It is found in the cytoplasm. Its function is as follows. Associates with the EF-Tu.GDP complex and induces the exchange of GDP to GTP. It remains bound to the aminoacyl-tRNA.EF-Tu.GTP complex up to the GTP hydrolysis stage on the ribosome. This is Elongation factor Ts from Mycoplasmoides gallisepticum (strain R(low / passage 15 / clone 2)) (Mycoplasma gallisepticum).